The following is a 304-amino-acid chain: Solute carrier family 25 member 34 (304 aa).

Solcar repeat units follow at residues 4–97 (VPPA…ACQA), 101–194 (QQPG…AKAW), and 204–295 (DSWL…LRKL). 6 consecutive transmembrane segments (helical) span residues 7–27 (AVDL…TNPL), 45–65 (TYPR…RADG), 98–120 (GLSQ…GAFV), 170–191 (VGGA…FASA), 206–226 (WLVA…VMTP), and 278–301 (LGPH…WGQH).

The protein belongs to the mitochondrial carrier (TC 2.A.29) family.

Its subcellular location is the mitochondrion inner membrane. It catalyses the reaction a dicarboxylate(in) + sulfate(out) = a dicarboxylate(out) + sulfate(in). Functionally, putative antiporter that exchanges dicarboxylates and sulfur oxoanions across the inner membrane of mitochondria. In Bos taurus (Bovine), this protein is Solute carrier family 25 member 34 (SLC25A34).